Here is a 297-residue protein sequence, read N- to C-terminus: Syntaxin-4 (297 aa).

Residues 1 to 12 (MRDRTHELRQGD) show a composition bias toward basic and acidic residues. Positions 1 to 21 (MRDRTHELRQGDDSSDEEDKE) are disordered. Residues 1–275 (MRDRTHELRQ…QKKARKKKVL (275 aa)) are Cytoplasmic-facing. 2 positions are modified to phosphoserine: Ser14 and Ser15. Thr31 is subject to Phosphothreonine. Phosphoserine occurs at positions 36, 117, 208, and 248. The stretch at 43-163 (HKVRTIRQTI…ERIRRQLKIT (121 aa)) forms a coiled coil. Residues 154 to 297 (ERIRRQLKIT…AVIIGVTVVG (144 aa)) form an interaction with CENPF region. In terms of domain architecture, t-SNARE coiled-coil homology spans 200–262 (LNEISARHSE…ERGQEHVKTA (63 aa)). Residues 276 to 296 (IAICVSITVVLLAVIIGVTVV) traverse the membrane as a helical; Anchor for type IV membrane protein segment. A topological domain (extracellular) is located at residue Gly297.

The protein belongs to the syntaxin family. Component of the SNARE complex composed of STX4, SNAP23 and VAMP7 that interacts with SYT7 during lysosomal exocytosis. Found in a complex with VAMP8 and SNAP23. Detected in a complex with SNAP23 and STXBP4. Interacts with VAMP2. Interacts with SNAP23 and SNAPIN. Interacts with LLGL1. Interacts (via C-terminus) with CENPF. Interacts with DOC2B. Interacts with STXBP6. Interacts with STXBP3; excludes interaction with DOC2B and SNAP25. Interacts with STXBP4; excludes interaction with VAMP2. Interacts with STXBP5L. As to expression, expressed in neutrophils and neutrophil-differentiated HL-60 cells. Expression in neutrophils increases with differentiation.

The protein localises to the cell membrane. The protein resides in the cell projection. It is found in the neuron projection. Its subcellular location is the stereocilium. In terms of biological role, plasma membrane t-SNARE that mediates docking of transport vesicles. Necessary for the translocation of SLC2A4 from intracellular vesicles to the plasma membrane. In neurons, recruited at neurite tips to membrane domains rich in the phospholipid 1-oleoyl-2-palmitoyl-PC (OPPC) which promotes neurite tip surface expression of the dopamine transporter SLC6A3/DAT by facilitating fusion of SLC6A3-containing transport vesicles with the plasma membrane. Together with STXB3 and VAMP2, may also play a role in docking/fusion of intracellular GLUT4-containing vesicles with the cell surface in adipocytes and in docking of synaptic vesicles at presynaptic active zones. Required for normal hearing. This chain is Syntaxin-4 (STX4), found in Homo sapiens (Human).